The chain runs to 426 residues: Adenylosuccinate synthetase (426 aa).

GTP is bound by residues 12 to 18 (GDEGKGK) and 40 to 42 (GHT). Residue D13 is the Proton acceptor of the active site. 2 residues coordinate Mg(2+): D13 and G40. IMP is bound by residues 13–16 (DEGK), 38–41 (NAGH), T131, R145, Q226, T241, and R305. Catalysis depends on H41, which acts as the Proton donor. Substrate is bound at residue 301 to 307 (ATTGRKR). Residues R307, 333–335 (KLD), and 415–417 (SVG) each bind GTP.

The protein belongs to the adenylosuccinate synthetase family. Homodimer. Requires Mg(2+) as cofactor.

It localises to the cytoplasm. It carries out the reaction IMP + L-aspartate + GTP = N(6)-(1,2-dicarboxyethyl)-AMP + GDP + phosphate + 2 H(+). It functions in the pathway purine metabolism; AMP biosynthesis via de novo pathway; AMP from IMP: step 1/2. Its function is as follows. Plays an important role in the de novo pathway of purine nucleotide biosynthesis. Catalyzes the first committed step in the biosynthesis of AMP from IMP. This Nitratidesulfovibrio vulgaris (strain ATCC 29579 / DSM 644 / CCUG 34227 / NCIMB 8303 / VKM B-1760 / Hildenborough) (Desulfovibrio vulgaris) protein is Adenylosuccinate synthetase.